Here is a 285-residue protein sequence, read N- to C-terminus: NAD kinase (285 aa).

Residue D67 is the Proton acceptor of the active site. Residues 67-68 (DG), 141-142 (ND), R152, K169, D171, 182-187 (TGYSLS), and Q242 contribute to the NAD(+) site.

The protein belongs to the NAD kinase family. It depends on a divalent metal cation as a cofactor.

The protein localises to the cytoplasm. It carries out the reaction NAD(+) + ATP = ADP + NADP(+) + H(+). Its function is as follows. Involved in the regulation of the intracellular balance of NAD and NADP, and is a key enzyme in the biosynthesis of NADP. Catalyzes specifically the phosphorylation on 2'-hydroxyl of the adenosine moiety of NAD to yield NADP. This chain is NAD kinase, found in Trichlorobacter lovleyi (strain ATCC BAA-1151 / DSM 17278 / SZ) (Geobacter lovleyi).